The primary structure comprises 335 residues: Pyridoxal 5'-phosphate synthase subunit PdxS (335 aa).

Aspartate 59 provides a ligand contact to D-ribose 5-phosphate. Lysine 116 acts as the Schiff-base intermediate with D-ribose 5-phosphate in catalysis. Residue glycine 188 coordinates D-ribose 5-phosphate. Lysine 200 lines the D-glyceraldehyde 3-phosphate pocket. Residues glycine 253 and 274–275 (GS) each bind D-ribose 5-phosphate.

Belongs to the PdxS/SNZ family. In the presence of PdxT, forms a dodecamer of heterodimers.

The enzyme catalyses aldehydo-D-ribose 5-phosphate + D-glyceraldehyde 3-phosphate + L-glutamine = pyridoxal 5'-phosphate + L-glutamate + phosphate + 3 H2O + H(+). The protein operates within cofactor biosynthesis; pyridoxal 5'-phosphate biosynthesis. Functionally, catalyzes the formation of pyridoxal 5'-phosphate from ribose 5-phosphate (RBP), glyceraldehyde 3-phosphate (G3P) and ammonia. The ammonia is provided by the PdxT subunit. Can also use ribulose 5-phosphate and dihydroxyacetone phosphate as substrates, resulting from enzyme-catalyzed isomerization of RBP and G3P, respectively. This is Pyridoxal 5'-phosphate synthase subunit PdxS from Desulfurococcus amylolyticus (strain DSM 18924 / JCM 16383 / VKM B-2413 / 1221n) (Desulfurococcus kamchatkensis).